The sequence spans 790 residues: Cadherin-6 (790 aa).

Residues methionine 1 to glycine 30 form the signal peptide. Positions phenylalanine 31–arginine 53 are excised as a propeptide. 5 consecutive Cadherin domains span residues serine 54–phenylalanine 159, threonine 160–phenylalanine 268, proline 269–phenylalanine 383, serine 384–proline 486, and glutamate 487–proline 608. The Extracellular portion of the chain corresponds to serine 54–alanine 615. N-linked (GlcNAc...) asparagine glycans are attached at residues asparagine 165 and asparagine 255. Positions valine 261 to arginine 289 are disordered. 3 N-linked (GlcNAc...) asparagine glycosylation sites follow: asparagine 437, asparagine 455, and asparagine 536. A helical membrane pass occupies residues leucine 616–leucine 636. The Cytoplasmic portion of the chain corresponds to arginine 637–serine 790.

It localises to the cell membrane. Functionally, cadherins are calcium-dependent cell adhesion proteins. They preferentially interact with themselves in a homophilic manner in connecting cells; cadherins may thus contribute to the sorting of heterogeneous cell types. This chain is Cadherin-6 (CDH6), found in Gallus gallus (Chicken).